A 432-amino-acid chain; its full sequence is Protein ABHD8 (432 aa).

Disordered regions lie at residues 47 to 69 and 121 to 149; these read KHAGPAPAPTPPPPLSDAAQGDQ and PAGSDGRSVPGSAGSGSGGRRRRARRPKR. Positions 52–61 are enriched in pro residues; the sequence is APAPTPPPPL. Residues 139 to 149 are compositionally biased toward basic residues; sequence GRRRRARRPKR. The AB hydrolase-1 domain occupies 170 to 272; sequence VLFFIHGVGG…HKVIMINGGG (103 aa). Catalysis depends on charge relay system residues Ser245, Asp363, and His391.

Belongs to the AB hydrolase superfamily. As to quaternary structure, interacts with NLRP3 (via NACHT and LLR domains); this interaction is enhanced in the presence of NLRP3 inflammasome inducers, such as ATP, nigericin, silica, or alum. Interacts with ZDHHC12.

It localises to the cytoplasm. In terms of biological role, negatively regulates NLRP3-driven inflammation. Promotes NLRP3 degradation through the chaperone-mediated autophagy (CMA) pathway, hence attenuating inflammasome activation and IL1B secretion. Acts by recruiting palmitoyltransferase ZDHHC12 to NLRP3, facilitating NLRP3 palmitoylation and subsequent degradation. The protein is Protein ABHD8 of Bos taurus (Bovine).